Reading from the N-terminus, the 444-residue chain is Acyl-CoA 6-desaturase (444 aa).

Residues 1 to 130 (MGGGGQQTDR…EAEGCFKTQP (130 aa)) are Cytoplasmic-facing. One can recognise a Cytochrome b5 heme-binding domain in the interval 18 to 95 (FSSYTWEEVQ…LKPLLIGELE (78 aa)). Residues 131–151 (LFFALHLGHILLLEAIAFMMV) traverse the membrane as a helical segment. Topologically, residues 152-157 (WYFGTG) are lumenal. A helical transmembrane segment spans residues 158–178 (WINTLIVAVILATAQSQAGWL). The Cytoplasmic segment spans residues 179-264 (QHDFGHLSVF…KHLPYNHQHK (86 aa)). A Histidine box-1 motif is present at residues 180 to 184 (HDFGH). The short motif at 217-221 (HFQHH) is the Histidine box-2 element. Residues 265–285 (YFFFIGPPLLIPVYFQFQIFH) form a helical membrane-spanning segment. The Lumenal segment spans residues 286 to 305 (NMISHGMWVDLLWCISYYVR). Residues 306–326 (YFLCYTQFYGVFWAIILFNFV) form a helical membrane-spanning segment. Residues 327–444 (RFMESHWFVW…ELWLDAYLNK (118 aa)) are Cytoplasmic-facing. The Histidine box-3 signature appears at 382 to 386 (QIEHH).

This sequence belongs to the fatty acid desaturase type 1 family.

The protein localises to the endoplasmic reticulum membrane. It catalyses the reaction (9Z,12Z)-octadecadienoyl-CoA + 2 Fe(II)-[cytochrome b5] + O2 + 2 H(+) = (6Z,9Z,12Z)-octadecatrienoyl-CoA + 2 Fe(III)-[cytochrome b5] + 2 H2O. It carries out the reaction (9Z,12Z,15Z)-octadecatrienoyl-CoA + 2 Fe(II)-[cytochrome b5] + O2 + 2 H(+) = (6Z,9Z,12Z,15Z)-octadecatetraenoyl-CoA + 2 Fe(III)-[cytochrome b5] + 2 H2O. The enzyme catalyses (8Z,11Z,14Z,17Z)-eicosatetraenoyl-CoA + 2 Fe(II)-[cytochrome b5] + O2 + 2 H(+) = (5Z,8Z,11Z,14Z,17Z)-eicosapentaenoyl-CoA + 2 Fe(III)-[cytochrome b5] + 2 H2O. The catalysed reaction is (8Z,11Z,14Z)-eicosatrienoyl-CoA + 2 Fe(II)-[cytochrome b5] + O2 + 2 H(+) = (5Z,8Z,11Z,14Z)-eicosatetraenoyl-CoA + 2 Fe(III)-[cytochrome b5] + 2 H2O. The protein operates within lipid metabolism; polyunsaturated fatty acid biosynthesis. Its function is as follows. Fatty acid desaturase with bifunctional delta-5 and delta-6 activities. Component of a lipid metabolic pathway that catalyzes the biosynthesis of polyunsaturated fatty acids (PUFA) with preference toward n-3 substrates and Delta-6 function. The sequence is that of Acyl-CoA 6-desaturase (fads2) from Danio rerio (Zebrafish).